Consider the following 348-residue polypeptide: DnaJ homolog subfamily B member 5 (348 aa).

The J domain maps to 4-68; sequence DYYKILGIPS…KKRGLYDQYG (65 aa).

This Bos taurus (Bovine) protein is DnaJ homolog subfamily B member 5 (DNAJB5).